The primary structure comprises 369 residues: Uroporphyrinogen decarboxylase (369 aa).

The interval 1 to 26 (MPVLHVDARPGSGPGGVSPPPSGAAL) is disordered. Residues 56–60 (RQAGR), Asp105, Tyr180, Ser235, and His348 each bind substrate.

This sequence belongs to the uroporphyrinogen decarboxylase family. As to quaternary structure, homodimer.

Its subcellular location is the cytoplasm. The catalysed reaction is uroporphyrinogen III + 4 H(+) = coproporphyrinogen III + 4 CO2. It functions in the pathway porphyrin-containing compound metabolism; protoporphyrin-IX biosynthesis; coproporphyrinogen-III from 5-aminolevulinate: step 4/4. Catalyzes the decarboxylation of four acetate groups of uroporphyrinogen-III to yield coproporphyrinogen-III. The polypeptide is Uroporphyrinogen decarboxylase (Frankia casuarinae (strain DSM 45818 / CECT 9043 / HFP020203 / CcI3)).